The chain runs to 576 residues: Pentatricopeptide repeat-containing protein At1g79080, chloroplastic (576 aa).

Residues 1-37 constitute a chloroplast transit peptide; sequence MSTLLNSVLSMASPESSPRKAVGFVSHIPSGFLHFSS. PPR repeat units lie at residues 105-139, 140-174, 175-209, 210-244, 245-279, 280-314, 315-349, 352-386, 387-417, 422-456, 457-487, 493-527, and 528-562; these read NVAHSTQLLYDLCKANRLKKAIRVIELMVSSGIIP, DASAYTYLVNQLCKRGNVGYAMQLVEKMEDHGYPS, NTVTYNALVRGLCMLGSLNQSLQFVERLMQKGLAP, NAFTYSFLLEAAYKERGTDEAVKLLDEIIVKGGEP, NLVSYNVLLTGFCKEGRTDDAMALFRELPAKGFKA, NVVSYNILLRCLCCDGRWEEANSLLAEMDGGDRAP, SVVTYNILINSLAFHGRTEQALQVLKEMSKGNHQF, TATSYNPVIARLCKEGKVDLVVKCLDEMIYRRCKP, NEGTYNAIGSLCEHNSKVQEAFYIIQSLSNK, THDFYKSVITSLCRKGNTFAAFQLLYEMTRCGFDP, DAHTYSALIRGLCLEGMFTGAMEVLSIMEES, TVDNFNAMILGLCKIRRTDLAMEVFEMMVEKKRMP, and NETTYAILVEGIAHEDELELAKEVLDELRLRKVIG.

This sequence belongs to the PPR family. P subfamily.

The protein localises to the plastid. It is found in the chloroplast. This Arabidopsis thaliana (Mouse-ear cress) protein is Pentatricopeptide repeat-containing protein At1g79080, chloroplastic.